The primary structure comprises 281 residues: MNAPQQSPEIGREILAAGYRTNLHDQGEGFPALLIHGSGPASPPGPTGAGSFRSSQTRRVIAPDMLGFGYSERPADGKYSQARWVEHAIGVLDALGIQQGDIVGNSFGGGLALALAIRHPERVRRLVLMGSVGVSFPITAGLETAWGYTPSLANMRRLLDLFAHDRTLVNDELAELRYQASIRPGFQESFAAMFPPPRQNGVDDLASNETDIRALPNETLVIHGREDRIIPLQASLTLAQWIPNAQLHVFGQCGHWTQIEHAERFARLVENFLAEADALHS.

Residues 30–55 form a disordered region; the sequence is FPALLIHGSGPASPPGPTGAGSFRSS. Residues 31-261 form the AB hydrolase-1 domain; it reads PALLIHGSGP…QCGHWTQIEH (231 aa). Catalysis depends on residues Ser106, Asp227, and His255.

The protein belongs to the DmpD/TodF/XylF esterase family.

The enzyme catalyses (2Z,4E)-2-hydroxy-6-oxohexa-2,4-dienoate + H2O = 2-oxopent-4-enoate + formate + H(+). It participates in aromatic compound metabolism; benzoate degradation via hydroxylation. Functionally, catalyzes the conversion of 2-hydroxymuconate semialdehyde to 2-hydroxypent-2,4-dienoate. The sequence is that of 2-hydroxymuconate semialdehyde hydrolase (xylF) from Pseudomonas putida (Arthrobacter siderocapsulatus).